Reading from the N-terminus, the 212-residue chain is uncharacterized protein (212 aa).

Residues G53, E74, and D97 each coordinate S-adenosyl-L-methionine.

This sequence belongs to the methyltransferase superfamily. YrrT family.

Functionally, could be a S-adenosyl-L-methionine-dependent methyltransferase. This is an uncharacterized protein from Bacillus cereus (strain ATCC 10987 / NRS 248).